Here is a 963-residue protein sequence, read N- to C-terminus: Exportin-T (963 aa).

An N-acetylmethionine modification is found at Met1. The residue at position 635 (Lys635) is an N6-acetyllysine.

Belongs to the exportin family. In terms of assembly, found in a complex with XPOT, Ran and tRNA. Probably found in a complex with nucleoporins. Interacts with Ran and tRNA in a GTP-dependent manner.

The protein resides in the nucleus. It localises to the cytoplasm. Mediates the nuclear export of aminoacylated tRNAs. In the nucleus binds to tRNA and to the GTPase Ran in its active GTP-bound form. Docking of this trimeric complex to the nuclear pore complex (NPC) is mediated through binding to nucleoporins. Upon transit of a nuclear export complex into the cytoplasm, disassembling of the complex and hydrolysis of Ran-GTP to Ran-GDP (induced by RANBP1 and RANGAP1, respectively) cause release of the tRNA from the export receptor. XPOT then return to the nuclear compartment and mediate another round of transport. The directionality of nuclear export is thought to be conferred by an asymmetric distribution of the GTP- and GDP-bound forms of Ran between the cytoplasm and nucleus. The protein is Exportin-T (Xpot) of Mus musculus (Mouse).